The following is a 431-amino-acid chain: Enolase (431 aa).

Positions 157 and 166 each coordinate substrate. Glutamate 209 functions as the Proton donor in the catalytic mechanism. Mg(2+) contacts are provided by aspartate 244, glutamate 293, and aspartate 318. Substrate-binding residues include glutamate 293 and aspartate 318. Catalysis depends on lysine 343, which acts as the Proton acceptor. Substrate-binding positions include 370-373 (SHRS) and lysine 394.

It belongs to the enolase family. In terms of assembly, homodimer. The cofactor is Mg(2+).

It localises to the cytoplasm. The enzyme catalyses (2R)-2-phosphoglycerate = phosphoenolpyruvate + H2O. The protein operates within carbohydrate degradation; glycolysis; pyruvate from D-glyceraldehyde 3-phosphate: step 4/5. In Fasciola hepatica (Liver fluke), this protein is Enolase (ENO).